A 151-amino-acid polypeptide reads, in one-letter code: Putative truncated GMC-type inactive oxidoreductase L893 (151 aa).

The protein belongs to the GMC oxidoreductase family.

The protein resides in the virion. This is Putative truncated GMC-type inactive oxidoreductase L893 from Acanthamoeba polyphaga (Amoeba).